A 329-amino-acid polypeptide reads, in one-letter code: GMP reductase (329 aa).

C178 acts as the Thioimidate intermediate in catalysis. Residue 207–230 coordinates NADP(+); it reads VIADGGIRTHGDIAKSIRMGATMV.

Belongs to the IMPDH/GMPR family. GuaC type 2 subfamily.

The enzyme catalyses IMP + NH4(+) + NADP(+) = GMP + NADPH + 2 H(+). Functionally, catalyzes the irreversible NADPH-dependent deamination of GMP to IMP. It functions in the conversion of nucleobase, nucleoside and nucleotide derivatives of G to A nucleotides, and in maintaining the intracellular balance of A and G nucleotides. The protein is GMP reductase of Lactococcus lactis subsp. cremoris (strain SK11).